The following is a 396-amino-acid chain: Ribosomal RNA large subunit methyltransferase I (396 aa).

The 78-residue stretch at Ala2–Phe79 folds into the PUA domain.

The protein belongs to the methyltransferase superfamily. RlmI family.

The protein resides in the cytoplasm. It catalyses the reaction cytidine(1962) in 23S rRNA + S-adenosyl-L-methionine = 5-methylcytidine(1962) in 23S rRNA + S-adenosyl-L-homocysteine + H(+). Functionally, specifically methylates the cytosine at position 1962 (m5C1962) of 23S rRNA. The chain is Ribosomal RNA large subunit methyltransferase I from Shewanella baltica (strain OS155 / ATCC BAA-1091).